Consider the following 466-residue polypeptide: Glutamate--tRNA ligase 2 (466 aa).

Residues 11-21 (PSPTGFLHIGG) carry the 'HIGH' region motif. The 'KMSKS' region motif lies at 239–243 (KLSKR). K242 is a binding site for ATP.

The protein belongs to the class-I aminoacyl-tRNA synthetase family. Glutamate--tRNA ligase type 1 subfamily. As to quaternary structure, monomer.

The protein resides in the cytoplasm. It carries out the reaction tRNA(Glu) + L-glutamate + ATP = L-glutamyl-tRNA(Glu) + AMP + diphosphate. Catalyzes the attachment of glutamate to tRNA(Glu) in a two-step reaction: glutamate is first activated by ATP to form Glu-AMP and then transferred to the acceptor end of tRNA(Glu). In Roseobacter denitrificans (strain ATCC 33942 / OCh 114) (Erythrobacter sp. (strain OCh 114)), this protein is Glutamate--tRNA ligase 2.